The primary structure comprises 425 residues: Malate transporter MleP (425 aa).

11 helical membrane passes run 11–31 (GISL…TLLG), 35–55 (LDMV…YFIG), 65–85 (LGGG…FHIV), 96–116 (FMGG…CGSI), 134–154 (IALI…MLIG), 196–216 (IFSQ…IGAL), 246–266 (IKLD…LLMA), 269–289 (ILNK…IVFI), 310–330 (VIMT…LIDL), 339–359 (WQFV…SWFL), and 401–421 (FAQM…GILI).

Belongs to the 2-hydroxycarboxylate transporter (2-HCT) (TC 2.A.24) family.

The protein localises to the cell membrane. It carries out the reaction (S)-lactate(in) + (S)-malate(out) = (S)-lactate(out) + (S)-malate(in). The enzyme catalyses (R)-lactate(in) + (S)-malate(out) = (R)-lactate(out) + (S)-malate(in). The catalysed reaction is glycolate(in) + (S)-malate(out) = glycolate(out) + (S)-malate(in). Its function is as follows. Secondary transporter involved in malolactic fermentation. Catalyzes the uptake of divalent malate into the cell coupled to the exit of monovalent lactate, a product of malate degradation (precursor/product exchange). The malate/lactate exchange is electrogenic and results in the generation of a membrane potential. Is highly selective for the S-enantiomer of malate. In the absence of lactate, MleP can also catalyze the proton-dependent transport of malate. In vitro, transports a range of substrates that contain the 2-hydroxycarboxylate motif, HO-CR(2)-COO(-), with a preference for malate, lactate and glycolate. Modification of the OH or the COO(-) groups of the 2-hydroxycarboxylate motif drastically reduces the affinity of the transporter for the substrates, indicating their relevance in substrate recognition. Significant activity is also observed with some 2-oxocarboxylates. Transports only poorly citromalate. Citrate binds to MleP but is not translocated. In Lactococcus lactis subsp. lactis (strain IL1403) (Streptococcus lactis), this protein is Malate transporter MleP.